A 125-amino-acid polypeptide reads, in one-letter code: Large ribosomal subunit protein bL12 (125 aa).

Belongs to the bacterial ribosomal protein bL12 family. In terms of assembly, homodimer. Part of the ribosomal stalk of the 50S ribosomal subunit. Forms a multimeric L10(L12)X complex, where L10 forms an elongated spine to which 2 to 4 L12 dimers bind in a sequential fashion. Binds GTP-bound translation factors.

Its function is as follows. Forms part of the ribosomal stalk which helps the ribosome interact with GTP-bound translation factors. Is thus essential for accurate translation. The polypeptide is Large ribosomal subunit protein bL12 (Francisella tularensis subsp. holarctica (strain FTNF002-00 / FTA)).